The chain runs to 55 residues: UPF0391 membrane protein Sfum_0248 (55 aa).

2 consecutive transmembrane segments (helical) span residues 4 to 24 and 28 to 48; these read WALI…GGII and AWIA…SLLS.

The protein belongs to the UPF0391 family.

The protein resides in the cell membrane. The sequence is that of UPF0391 membrane protein Sfum_0248 from Syntrophobacter fumaroxidans (strain DSM 10017 / MPOB).